We begin with the raw amino-acid sequence, 245 residues long: tRNA1(Val) (adenine(37)-N6)-methyltransferase (245 aa).

The protein belongs to the methyltransferase superfamily. tRNA (adenine-N(6)-)-methyltransferase family.

Its subcellular location is the cytoplasm. It catalyses the reaction adenosine(37) in tRNA1(Val) + S-adenosyl-L-methionine = N(6)-methyladenosine(37) in tRNA1(Val) + S-adenosyl-L-homocysteine + H(+). Functionally, specifically methylates the adenine in position 37 of tRNA(1)(Val) (anticodon cmo5UAC). This chain is tRNA1(Val) (adenine(37)-N6)-methyltransferase, found in Escherichia fergusonii (strain ATCC 35469 / DSM 13698 / CCUG 18766 / IAM 14443 / JCM 21226 / LMG 7866 / NBRC 102419 / NCTC 12128 / CDC 0568-73).